A 131-amino-acid polypeptide reads, in one-letter code: Modulator protein MzrA (131 aa).

Residues 1–14 (MSIRWLFPKLTPRK) are Cytoplasmic-facing. A helical transmembrane segment spans residues 15–31 (VARILILLALPIIALTQ). The Periplasmic portion of the chain corresponds to 32-131 (SQSLRHSQDD…KLTQKQSKLG (100 aa)).

This sequence belongs to the MzrA family. As to quaternary structure, interacts with EnvZ.

The protein localises to the cell inner membrane. Modulates the activity of the EnvZ/OmpR two-component regulatory system, probably by directly modulating EnvZ enzymatic activity and increasing stability of phosphorylated OmpR. In Pectobacterium carotovorum subsp. carotovorum (strain PC1), this protein is Modulator protein MzrA.